The following is a 111-amino-acid chain: Probable 4-amino-4-deoxy-L-arabinose-phosphoundecaprenol flippase subunit ArnE (111 aa).

Over 1–35 (MIWLTLVFASLLSVAGQLCQKQATCFVAISKRRKH) the chain is Cytoplasmic. A helical transmembrane segment spans residues 36 to 56 (IVLWLGLALACLGLAMVLWLL). An EamA domain is found at 40 to 109 (LGLALACLGL…IIGGIVILGS (70 aa)). Topologically, residues 57 to 60 (VLQN) are periplasmic. Residues 61–81 (VPVGIAYPMLSLNFVWVTLAA) form a helical membrane-spanning segment. At 82-87 (VKLWHE) the chain is on the cytoplasmic side. The chain crosses the membrane as a helical span at residues 88–108 (PVSPRHWCGVAFIIGGIVILG). Residues 109–111 (STV) lie on the Periplasmic side of the membrane.

It belongs to the ArnE family. Heterodimer of ArnE and ArnF.

It localises to the cell inner membrane. It functions in the pathway bacterial outer membrane biogenesis; lipopolysaccharide biosynthesis. In terms of biological role, translocates 4-amino-4-deoxy-L-arabinose-phosphoundecaprenol (alpha-L-Ara4N-phosphoundecaprenol) from the cytoplasmic to the periplasmic side of the inner membrane. This is Probable 4-amino-4-deoxy-L-arabinose-phosphoundecaprenol flippase subunit ArnE from Escherichia coli O157:H7.